The sequence spans 161 residues: MVMAMGFDTVVAAIMATAIIVAVAYTFLAGSTSIAELSVESYKDAVNSAVKKLRSDIEILSVSYDNSTSKIVAYFKNTGDERYPDFSEFDAIVYGRTSGGEMVSFYVNSTVFSITNELINPGIFDPQEVAKLEAVQPLQNGTYVLLICTPNAVCDSADFSV.

The signal sequence occupies residues 1-35 (MVMAMGFDTVVAAIMATAIIVAVAYTFLAGSTSIA).

This is an uncharacterized protein from Archaeoglobus fulgidus (strain ATCC 49558 / DSM 4304 / JCM 9628 / NBRC 100126 / VC-16).